The sequence spans 154 residues: Interleukin-2 (154 aa).

Residues 1–20 form the signal peptide; sequence MYKMQLLCCIALTLALMANG. The O-linked (GalNAc...) threonine glycan is linked to T23. A disulfide bridge connects residues C78 and C126.

Belongs to the IL-2 family.

Its subcellular location is the secreted. In terms of biological role, cytokine produced by activated CD4-positive helper T-cells and to a lesser extend activated CD8-positive T-cells and natural killer (NK) cells that plays pivotal roles in the immune response and tolerance. Binds to a receptor complex composed of either the high-affinity trimeric IL-2R (IL2RA/CD25, IL2RB/CD122 and IL2RG/CD132) or the low-affinity dimeric IL-2R (IL2RB and IL2RG). Interaction with the receptor leads to oligomerization and conformation changes in the IL-2R subunits resulting in downstream signaling starting with phosphorylation of JAK1 and JAK3. In turn, JAK1 and JAK3 phosphorylate the receptor to form a docking site leading to the phosphorylation of several substrates including STAT5. This process leads to activation of several pathways including STAT, phosphoinositide-3-kinase/PI3K and mitogen-activated protein kinase/MAPK pathways. Functions as a T-cell growth factor and can increase NK-cell cytolytic activity as well. Promotes strong proliferation of activated B-cells and subsequently immunoglobulin production. Plays a pivotal role in regulating the adaptive immune system by controlling the survival and proliferation of regulatory T-cells, which are required for the maintenance of immune tolerance. Moreover, participates in the differentiation and homeostasis of effector T-cell subsets, including Th1, Th2, Th17 as well as memory CD8-positive T-cells. This chain is Interleukin-2 (IL2), found in Sus scrofa (Pig).